Reading from the N-terminus, the 284-residue chain is L-ribulose-5-phosphate 3-epimerase UlaE (284 aa).

This sequence belongs to the L-ribulose-5-phosphate 3-epimerase family.

It catalyses the reaction L-ribulose 5-phosphate = L-xylulose 5-phosphate. Its pathway is cofactor degradation; L-ascorbate degradation; D-xylulose 5-phosphate from L-ascorbate: step 3/4. In terms of biological role, catalyzes the isomerization of L-xylulose-5-phosphate to L-ribulose-5-phosphate. Is involved in the anaerobic L-ascorbate utilization. The polypeptide is L-ribulose-5-phosphate 3-epimerase UlaE (Escherichia coli O45:K1 (strain S88 / ExPEC)).